We begin with the raw amino-acid sequence, 621 residues long: MPIRQLPEILINQIAAGEVVERPASVVKELVENAIDAGATRVDIELEAAGVRLIRIRDNGHGMAAQELPLAVLRHATSKIASLDDLEAVATLGFRGEALPSIASVSRFTLMSRRATDEHGAVLQIEGGTLGEVIPHAHAPGTTVEVRELFYNVPARRKFLRAERTELGHIEEWARSLALAHPDLELRLSHNGKLSRRYKPGDWYSDARLIEILGEDFAHQALRVDHSGAGLRLHGCIVQPHYSRLNADQQYLYVNGRPVRDRSVAHAVKQAYSDVLYQGRHPAYVLFLELDPARVDVNVHPAKHEVRFRDARLIHDFVYRTVQGTLAQTRAGTPPLAVGVGDVEGEGEGARPPGRHAVSFSGRRGGASHVLGSYSTSTAPLMQGVPSVSVADAPAAYAALYAAPPTQVMDAVPQMQTGLPLAAGAGDVPPLGYAIAQLHGIYILAECADGLIVVDMHAAHERIGYERLKRAHDGIGLRTQPLLVPMTLMVAEREADVAECEAETLASLGFEVTRSGPGSLQVRSIPALLSQAEPEMLLRDVLSDLSEHGHTRRVAEARDTLLATMACHGAVRAHRRLSISEMNALLRDMEATERSGQCNHGRPTWARFSLAEIDRWFLRGR.

The protein belongs to the DNA mismatch repair MutL/HexB family.

Functionally, this protein is involved in the repair of mismatches in DNA. It is required for dam-dependent methyl-directed DNA mismatch repair. May act as a 'molecular matchmaker', a protein that promotes the formation of a stable complex between two or more DNA-binding proteins in an ATP-dependent manner without itself being part of a final effector complex. The chain is DNA mismatch repair protein MutL from Xylella fastidiosa (strain M12).